Here is a 244-residue protein sequence, read N- to C-terminus: 2,5-diamino-6-ribosylamino-4(3H)-pyrimidinone 5'-phosphate reductase (244 aa).

NADP(+)-binding positions include T74, D78, I160, and 183-187; that span reads GSHVI.

Belongs to the HTP reductase family. As to quaternary structure, homodimer.

The enzyme catalyses 2,5-diamino-6-(1-D-ribitylamino)pyrimidin-4(3H)-one 5'-phosphate + NADP(+) = 2,5-diamino-6-(1-D-ribosylamino)pyrimidin-4(3H)-one 5'-phosphate + NADPH + H(+). The catalysed reaction is 2,5-diamino-6-(1-D-ribitylamino)pyrimidin-4(3H)-one 5'-phosphate + NAD(+) = 2,5-diamino-6-(1-D-ribosylamino)pyrimidin-4(3H)-one 5'-phosphate + NADH + H(+). It functions in the pathway cofactor biosynthesis; riboflavin biosynthesis. Its function is as follows. Catalyzes an early step in riboflavin biosynthesis, the NADPH-dependent reduction of the ribose side chain of 2,5-diamino-6-ribosylamino-4(3H)-pyrimidinone 5'-phosphate, yielding 2,5-diamino-6-ribitylamino-4(3H)-pyrimidinone 5'-phosphate. In Candida glabrata (strain ATCC 2001 / BCRC 20586 / JCM 3761 / NBRC 0622 / NRRL Y-65 / CBS 138) (Yeast), this protein is 2,5-diamino-6-ribosylamino-4(3H)-pyrimidinone 5'-phosphate reductase (RIB7).